A 103-amino-acid polypeptide reads, in one-letter code: Small ribosomal subunit protein uS10 (103 aa).

This sequence belongs to the universal ribosomal protein uS10 family. Part of the 30S ribosomal subunit.

Involved in the binding of tRNA to the ribosomes. This is Small ribosomal subunit protein uS10 from Natranaerobius thermophilus (strain ATCC BAA-1301 / DSM 18059 / JW/NM-WN-LF).